The chain runs to 186 residues: GTP cyclohydrolase 1 (186 aa).

Cysteine 78, histidine 81, and cysteine 150 together coordinate Zn(2+).

It belongs to the GTP cyclohydrolase I family. In terms of assembly, toroid-shaped homodecamer, composed of two pentamers of five dimers.

It catalyses the reaction GTP + H2O = 7,8-dihydroneopterin 3'-triphosphate + formate + H(+). It functions in the pathway cofactor biosynthesis; 7,8-dihydroneopterin triphosphate biosynthesis; 7,8-dihydroneopterin triphosphate from GTP: step 1/1. The chain is GTP cyclohydrolase 1 from Enterococcus faecalis (strain ATCC 700802 / V583).